Consider the following 394-residue polypeptide: Zinc-regulated GTPase metalloprotein activator 1 (394 aa).

The psi-PxLVp motif signature appears at Glu-16–Pro-23. Position 48–55 (Gly-48–Thr-55) interacts with GTP. 3 residues coordinate Zn(2+): Cys-106, Cys-108, and Cys-109. The short motif at Cys-106–Cys-109 is the CXCC motif element. GTP is bound by residues Cys-109–Asp-113 and Asn-202–Asp-205. A CobW C-terminal domain is found at Ile-272 to Val-375.

Belongs to the SIMIBI class G3E GTPase family. ZNG1 subfamily.

It localises to the nucleus. The catalysed reaction is GTP + H2O = GDP + phosphate + H(+). Zinc chaperone that directly transfers zinc cofactor to target metalloproteins, thereby activating them. Catalyzes zinc insertion into the active site of methionine aminopeptidase METAP1, which function to cleave the initiator methionine from polypeptides during or after protein translation. Mechanistically, the N-terminal psi-PxLVp motif binds to the C6H2-type zinc finger of inactive form of METAP1. After formation of the docked complex, zinc is transferred from the CXCC motif in the GTPase domain of ZNG1 to the zinc binding site in the peptidase domain of METAP1 in a process requiring GTP hydrolysis. GTP/GDP exchange is required for release of active METAP1. This is Zinc-regulated GTPase metalloprotein activator 1 (Zng1) from Rattus norvegicus (Rat).